Consider the following 402-residue polypeptide: Speedy protein E2B (402 aa).

Residues 1 to 89 form a disordered region; sequence MDRTETRFRK…EEPEKELAPE (89 aa). Polar residues predominate over residues 16-39; that stretch reads GKITTSRQPHPQNEQSPQRSTSGY. A compositionally biased stretch (acidic residues) spans 76 to 89; the sequence is DESEEEPEKELAPE.

The protein belongs to the Speedy/Ringo family.

This Homo sapiens (Human) protein is Speedy protein E2B (SPDYE2B).